We begin with the raw amino-acid sequence, 160 residues long: Serine-protein kinase RsbW (160 aa).

This sequence belongs to the anti-sigma-factor family.

It catalyses the reaction L-seryl-[protein] + ATP = O-phospho-L-seryl-[protein] + ADP + H(+). It carries out the reaction L-threonyl-[protein] + ATP = O-phospho-L-threonyl-[protein] + ADP + H(+). Functionally, negative regulator of sigma-B activity. Phosphorylates and inactivates its specific antagonist protein, RsbV. Upon phosphorylation of RsbV, RsbW is released and binds to sigma-B, thereby blocking its ability to form an RNA polymerase holoenzyme (E-sigma-B). The polypeptide is Serine-protein kinase RsbW (Bacillus cereus (strain Q1)).